Here is a 296-residue protein sequence, read N- to C-terminus: Ribosome biogenesis GTPase A (296 aa).

Residues 14–178 (RRQVTEKLKL…LLDTPGILWP (165 aa)) form the CP-type G domain. GTP contacts are provided by residues 58 to 61 (NKAD), 130 to 135 (NVGKST), and Gly-174.

It belongs to the TRAFAC class YlqF/YawG GTPase family. MTG1 subfamily. In terms of assembly, interacts with ctc. Interacts with the immature 50S ribosome subunit. 2 molecules of rbgA bind to one 50S subunit.

Its subcellular location is the cytoplasm. Its function is as follows. Essential protein that is required for a late step of 50S ribosomal subunit assembly. Has GTPase activity that is stimulated by interaction with the immature 50S ribosome subunit. Binds to the 23S rRNA. Required for the association of ribosomal proteins rplP and rpmA with the large subunit. The chain is Ribosome biogenesis GTPase A from Bacillus cereus (strain ATCC 14579 / DSM 31 / CCUG 7414 / JCM 2152 / NBRC 15305 / NCIMB 9373 / NCTC 2599 / NRRL B-3711).